The following is a 262-amino-acid chain: Indole-3-glycerol phosphate synthase (262 aa).

Belongs to the TrpC family.

It carries out the reaction 1-(2-carboxyphenylamino)-1-deoxy-D-ribulose 5-phosphate + H(+) = (1S,2R)-1-C-(indol-3-yl)glycerol 3-phosphate + CO2 + H2O. It functions in the pathway amino-acid biosynthesis; L-tryptophan biosynthesis; L-tryptophan from chorismate: step 4/5. This Leuconostoc mesenteroides subsp. mesenteroides (strain ATCC 8293 / DSM 20343 / BCRC 11652 / CCM 1803 / JCM 6124 / NCDO 523 / NBRC 100496 / NCIMB 8023 / NCTC 12954 / NRRL B-1118 / 37Y) protein is Indole-3-glycerol phosphate synthase.